The following is a 1093-amino-acid chain: Isoleucine--tRNA ligase, chloroplastic/mitochondrial (1093 aa).

The tract at residues Pro69–Lys103 is disordered. Over residues Lys90–Lys103 the composition is skewed to basic and acidic residues. Positions Pro155 to His165 match the 'HIGH' region motif. Glu682 lines the L-isoleucyl-5'-AMP pocket. The 'KMSKS' region motif lies at Lys723 to Ser727. Lys726 lines the ATP pocket. Zn(2+)-binding residues include Cys1050, Cys1053, Cys1070, and Cys1073.

It belongs to the class-I aminoacyl-tRNA synthetase family.

It is found in the plastid. Its subcellular location is the chloroplast. The protein localises to the mitochondrion. The enzyme catalyses tRNA(Ile) + L-isoleucine + ATP = L-isoleucyl-tRNA(Ile) + AMP + diphosphate. The polypeptide is Isoleucine--tRNA ligase, chloroplastic/mitochondrial (Arabidopsis thaliana (Mouse-ear cress)).